The following is a 538-amino-acid chain: MALSSTSTTNSLLPNRSLVQNQPLLPSPLKNAFFSNNSTKTVRFVQPISAVHSSDSNKIPIVSDKPSKSSPPAATATTAPAPAVTKTEWAVDSWKSKKALQLPEYPNQEELRSVLKTIDEFPPIVFAGEARSLEERLGEAAMGRAFLLQGGDCAESFKEFNANNIRDTFRILLQMGAVLMFGGQMPVIKVGRMAGQFAKPRSDSFEEKDGVKLPSYRGDNVNGDAFDVKSRTPDPQRLIRAYCQSAATLNLLRAFATGGYAAMQRINQWNLDFTEHSEQGDRYRELASRVDEALGFMTAAGLTMDHPIMKTTEFWTSHECLLLPYEQSLTRRDSTSGLYYDCSAHFLWVGERTRQLDGAHVEFLRGIANPLGIKVSDKMDPSALVKLIEILNPQNKAGRITIITRMGAENMRVKLPHLIRAVRRAGQIVTWVSDPMHGNTIKAPCGLKTRPFDSIRAEVRAFFDVHDQEGSHPGGVHLEMTGQNVTECIGGSRTVTFDDLSSRYHTHCDPRLNASQSLELSFIIAERLRKRRLGSQSV.

The N-terminal 74 residues, 1–74 (MALSSTSTTN…KPSKSSPPAA (74 aa)), are a transit peptide targeting the chloroplast. Residues 55 to 82 (DSNKIPIVSDKPSKSSPPAATATTAPAP) are disordered. Over residues 68 to 82 (KSSPPAATATTAPAP) the composition is skewed to low complexity. Threonine 75 carries the post-translational modification Blocked amino end (Thr).

It belongs to the class-II DAHP synthase family.

The protein resides in the plastid. It is found in the chloroplast. The enzyme catalyses D-erythrose 4-phosphate + phosphoenolpyruvate + H2O = 7-phospho-2-dehydro-3-deoxy-D-arabino-heptonate + phosphate. Its pathway is metabolic intermediate biosynthesis; chorismate biosynthesis; chorismate from D-erythrose 4-phosphate and phosphoenolpyruvate: step 1/7. Its activity is regulated as follows. Activation by tryptophan (a hysteretic factor). The chain is Phospho-2-dehydro-3-deoxyheptonate aldolase 1, chloroplastic (SHKA) from Solanum tuberosum (Potato).